A 120-amino-acid chain; its full sequence is uncharacterized protein (120 aa).

An N-acetyltransferase domain is found at 3-120; the sequence is IRYKKAFEKI…EKCEICHGSE (118 aa).

This is an uncharacterized protein from Bacillus methanolicus.